A 229-amino-acid polypeptide reads, in one-letter code: Protein fmp52-2, mitochondrial (229 aa).

Residues 1 to 45 constitute a mitochondrion transit peptide; the sequence is MTTAAVFGSTGAVGGQILATLLASDAFSSVKTVSRRLPNAQSPKL.

It belongs to the FMP52 family.

It is found in the mitochondrion outer membrane. In Aspergillus oryzae (strain ATCC 42149 / RIB 40) (Yellow koji mold), this protein is Protein fmp52-2, mitochondrial (fmp522).